Here is a 290-residue protein sequence, read N- to C-terminus: tRNA (adenine(58)-N(1))-methyltransferase catalytic subunit TRMT61A (290 aa).

Ser2 is subject to N-acetylserine. 5 substrate regions span residues 20-22 (LGH), 35-42 (QTQTRHGV), 64-65 (GW), 85-89 (QILYS), and 110-117 (SGTGSGSV). Residues Leu87, 114–116 (SGS), Glu135, Arg140, 163–164 (DV), and Asp181 contribute to the S-adenosyl-L-methionine site. Substrate stretches follow at residues 180-183 (LDIP) and 205-212 (SFSPCIEQ). Ser264 carries the post-translational modification Phosphoserine. Substrate is bound at residue Thr279.

Belongs to the class I-like SAM-binding methyltransferase superfamily. TRM61 family. As to quaternary structure, heterotetramer; composed of two copies of TRMT6 and two copies of TRMT61A.

The protein localises to the nucleus. The enzyme catalyses adenosine(58) in tRNA + S-adenosyl-L-methionine = N(1)-methyladenosine(58) in tRNA + S-adenosyl-L-homocysteine + H(+). It catalyses the reaction an adenosine in mRNA + S-adenosyl-L-methionine = an N(1)-methyladenosine in mRNA + S-adenosyl-L-homocysteine + H(+). In terms of biological role, catalytic subunit of tRNA (adenine-N(1)-)-methyltransferase, which catalyzes the formation of N(1)-methyladenine at position 58 (m1A58) in initiator methionyl-tRNA. Catalytic subunit of mRNA N(1)-methyltransferase complex, which mediates methylation of adenosine residues at the N(1) position of a small subset of mRNAs: N(1) methylation takes place in tRNA T-loop-like structures of mRNAs and is only present at low stoichiometries. This Mus musculus (Mouse) protein is tRNA (adenine(58)-N(1))-methyltransferase catalytic subunit TRMT61A (Trmt61a).